Consider the following 190-residue polypeptide: Segregation and condensation protein B (190 aa).

The protein belongs to the ScpB family. As to quaternary structure, homodimer. Homodimerization may be required to stabilize the binding of ScpA to the Smc head domains. Component of a cohesin-like complex composed of ScpA, ScpB and the Smc homodimer, in which ScpA and ScpB bind to the head domain of Smc. The presence of the three proteins is required for the association of the complex with DNA.

It localises to the cytoplasm. Participates in chromosomal partition during cell division. May act via the formation of a condensin-like complex containing Smc and ScpA that pull DNA away from mid-cell into both cell halves. This chain is Segregation and condensation protein B, found in Bacillus cereus (strain ZK / E33L).